Consider the following 1122-residue polypeptide: Phytochrome A (1122 aa).

Polar residues predominate over residues 1–11 (MSGSRPTQSSE). Residues 1 to 21 (MSGSRPTQSSEGSRRSRHSAR) form a disordered region. The region spanning 218–402 (SMERLCDTMV…VFAIHVNKEV (185 aa)) is the GAF domain. C323 contributes to the phytochromobilin binding site. One can recognise a PAS 1 domain in the interval 618–688 (VTSEMVRLIE…RMLENALEGT (71 aa)). Residues 695-747 (FEIKTHLSRADAGPISLVVNACASRDLHENVVGVCFVAHDLTGQKTVMDKFTR) enclose the PAC domain. The region spanning 748–822 (IEGDYKAIIQ…KNQEAFVNLG (75 aa)) is the PAS 2 domain. Positions 902–1119 (YIKRQIRNPL…SFIITAELAA (218 aa)) constitute a Histidine kinase domain.

The protein belongs to the phytochrome family. Homodimer. Interacts with NDPK2 and PKS4. Stabilized by interactions with PAPP5 and FYPP3 which are enhanced in the phosphorylated Pfr form. Interacts with COP1/SPA1 complex. Binds, via its photosensory domain, to PTAC12/HMR when photoactivated; this interaction stimulates its localization to photobodies. Interacts with FHY1, FHL and FHY3, especially upon far-red (FR) light illumination; when underphosphorylated. Forms PHYA/FHY1/HFR1 complex. Binds to PIF3/PAP3. Phosphorylated. Post-translationally, contains one covalently linked phytochromobilin chromophore. Expressed in fruits, flowers, leaves, stems, seedlings and roots.

Its subcellular location is the cytoplasm. It is found in the nucleus. The protein localises to the nucleoplasm. It localises to the nucleus speckle. Functionally, regulatory photoreceptor which exists in two forms that are reversibly interconvertible by light: the Pr form that absorbs maximally in the red region of the spectrum and the Pfr form that absorbs maximally in the far-red region. Photoconversion of Pr to Pfr induces an array of morphogenetic responses, whereas reconversion of Pfr to Pr cancels the induction of those responses. Pfr controls the expression of a number of nuclear genes including those encoding the small subunit of ribulose-bisphosphate carboxylase, chlorophyll A/B binding protein, protochlorophyllide reductase, rRNA, etc. It also controls the expression of its own gene(s) in a negative feedback fashion. Involved in the flowering time regulation. Can phosphorylate FHY1 and, possibly, FHL, in red light conditions; this inactivates their co-shuttling to the nucleus. Regulates phototropic responses both in the nucleus (e.g. hypocotyl elongation and cotyledon opening under high-irradiance conditions and seed germination under very-low-fluence conditions) and in the cytoplasm (e.g. negative gravitropism in blue light and red-enhanced phototropism). Promotes seed germination, suppression of hypocotyl elongation, and randomization of hypocotyl growth orientation in far-red light; these responses to far-red light are repressed by UNE10/PIF8. Stabilizes UNE10/PIF8 but sequesters PIF3/PAP3 from its target genes promoters in far-red light. This is Phytochrome A from Arabidopsis thaliana (Mouse-ear cress).